The chain runs to 139 residues: Putative pre-16S rRNA nuclease (139 aa).

Belongs to the YqgF nuclease family.

The protein resides in the cytoplasm. Functionally, could be a nuclease involved in processing of the 5'-end of pre-16S rRNA. The polypeptide is Putative pre-16S rRNA nuclease (Streptococcus pneumoniae serotype 19F (strain G54)).